The following is a 119-amino-acid chain: Large ribosomal subunit protein uL18 (119 aa).

Belongs to the universal ribosomal protein uL18 family. In terms of assembly, part of the 50S ribosomal subunit; part of the 5S rRNA/L5/L18/L25 subcomplex. Contacts the 5S and 23S rRNAs.

In terms of biological role, this is one of the proteins that bind and probably mediate the attachment of the 5S RNA into the large ribosomal subunit, where it forms part of the central protuberance. The sequence is that of Large ribosomal subunit protein uL18 from Clostridium botulinum (strain ATCC 19397 / Type A).